An 800-amino-acid polypeptide reads, in one-letter code: Phosphoinositide 3-kinase adapter protein 1 (800 aa).

The 138-residue stretch at 8–145 (GGYDVLILYA…AVKKAISEDS (138 aa)) folds into the TIR domain. A necessary and sufficient to mediate inhibition of NF-kappa-B downstream of activated TLRs region spans residues 10 to 144 (YDVLILYASD…EAVKKAISED (135 aa)). Positions 185 to 321 (VQPDHIRCGV…NIPASGLHLF (137 aa)) constitute a DBB domain. Position 266 is a phosphotyrosine (Tyr-266). Phosphotyrosine; by SYK is present on residues Tyr-423, Tyr-448, and Tyr-463. A disordered region spans residues 527 to 548 (EMASRPPVPVPRPESSSPQPDN). A coiled-coil region spans residues 643-663 (QQENLKRLRDSITRRQMEKQK). Residues 702 to 713 (PKKELKRGDWKT) are compositionally biased toward basic and acidic residues. A disordered region spans residues 702–800 (PKKELKRGDW…YPPPVPPRGR (99 aa)). The span at 714 to 737 (ESTSSTTSSASNRSSTRSILSVSS) shows a compositional bias: low complexity. A compositionally biased stretch (polar residues) spans 749-759 (SEASRSRSPIP). 2 stretches are compositionally biased toward pro residues: residues 767 to 777 (LPLPERPPRVP) and 791 to 800 (YPPPVPPRGR).

Homooligomer. Interacts (phosphorylated on tyrosine residues within YXXM motifs) with PIK3R1 (via SH2 domain); required for BCR- and TLR-mediated activation of phosphoinositide 3-kinase. Constitutively phosphorylated. Phosphorylated on tyrosine residues within the YXXM motifs by BTK and SYK. Isoform 1 and isoform 2 are phosphorylated on tyrosine residues, most likely within the YXXM motifs, via CD19 activation.

The protein resides in the cytoplasm. It is found in the cell membrane. Signaling adapter that contributes to B-cell development by linking B-cell receptor (BCR) signaling to the phosphoinositide 3-kinase (PI3K)-Akt signaling pathway. Has a complementary role to the BCR coreceptor CD19, coupling BCR and PI3K activation by providing a docking site for the PI3K subunit PIK3R1. Alternatively, links Toll-like receptor (TLR) signaling to PI3K activation, a process preventing excessive inflammatory cytokine production. Also involved in the activation of PI3K in natural killer cells. May be involved in the survival of mature B-cells via activation of REL. The polypeptide is Phosphoinositide 3-kinase adapter protein 1 (PIK3AP1) (Gallus gallus (Chicken)).